A 458-amino-acid polypeptide reads, in one-letter code: uncharacterized protein (458 aa).

The region spanning 5-65 (QAPVNKNDVV…KGYGFGRVLN (61 aa)) is the TRAM domain. Residues Cys78, Cys84, Cys87, and Cys165 each contribute to the [4Fe-4S] cluster site. 4 residues coordinate S-adenosyl-L-methionine: Gln289, Tyr318, Glu339, and Asp387. Residue Cys414 is the Nucleophile of the active site.

It belongs to the class I-like SAM-binding methyltransferase superfamily. RNA M5U methyltransferase family.

This is an uncharacterized protein from Halalkalibacterium halodurans (strain ATCC BAA-125 / DSM 18197 / FERM 7344 / JCM 9153 / C-125) (Bacillus halodurans).